A 429-amino-acid chain; its full sequence is Adenylosuccinate synthetase (429 aa).

Residues 12–18 and 40–42 contribute to the GTP site; these read GDEGKGK and GHT. Aspartate 13 (proton acceptor) is an active-site residue. The Mg(2+) site is built by aspartate 13 and glycine 40. IMP-binding positions include 13–16, 38–41, threonine 128, arginine 142, glutamine 223, threonine 238, and arginine 302; these read DEGK and NAGH. The active-site Proton donor is the histidine 41. 298–304 lines the substrate pocket; it reads TTTGRPR. Residues arginine 304, 330-332, and 412-414 each bind GTP; these read SID and SVG.

It belongs to the adenylosuccinate synthetase family. As to quaternary structure, homodimer. Mg(2+) serves as cofactor.

Its subcellular location is the cytoplasm. The enzyme catalyses IMP + L-aspartate + GTP = N(6)-(1,2-dicarboxyethyl)-AMP + GDP + phosphate + 2 H(+). It functions in the pathway purine metabolism; AMP biosynthesis via de novo pathway; AMP from IMP: step 1/2. Plays an important role in the de novo pathway of purine nucleotide biosynthesis. Catalyzes the first committed step in the biosynthesis of AMP from IMP. The protein is Adenylosuccinate synthetase of Bacillus thuringiensis (strain Al Hakam).